The chain runs to 343 residues: Ribosomal RNA small subunit methyltransferase C (343 aa).

Belongs to the methyltransferase superfamily. RsmC family. As to quaternary structure, monomer.

The protein resides in the cytoplasm. It catalyses the reaction guanosine(1207) in 16S rRNA + S-adenosyl-L-methionine = N(2)-methylguanosine(1207) in 16S rRNA + S-adenosyl-L-homocysteine + H(+). In terms of biological role, specifically methylates the guanine in position 1207 of 16S rRNA in the 30S particle. The polypeptide is Ribosomal RNA small subunit methyltransferase C (Escherichia fergusonii (strain ATCC 35469 / DSM 13698 / CCUG 18766 / IAM 14443 / JCM 21226 / LMG 7866 / NBRC 102419 / NCTC 12128 / CDC 0568-73)).